Here is a 195-residue protein sequence, read N- to C-terminus: Peroxiredoxin bcp1 (195 aa).

Residues 46 to 168 (IQVGDVIPDI…SHWIFEKGTG (123 aa)) enclose the Thioredoxin domain. Cys89 serves as the catalytic Cysteine sulfenic acid (-SOH) intermediate. Cysteines 89 and 94 form a disulfide.

It belongs to the peroxiredoxin family. BCP/PrxQ subfamily. As to quaternary structure, monomer. Post-translationally, the active site is a conserved redox-active cysteine residue, the peroxidatic cysteine (C(P)), which makes the nucleophilic attack on the peroxide substrate. The peroxide oxidizes the C(P)-SH to cysteine sulfenic acid (C(P)-SOH), which then reacts with another cysteine residue, the resolving cysteine (C(R)), to form a disulfide bridge. The disulfide is subsequently reduced by an appropriate electron donor to complete the catalytic cycle. In this atypical 2-Cys peroxiredoxin, C(R) is present in the same subunit to form an intramolecular disulfide. The disulfide is subsequently reduced by thioredoxin.

The protein localises to the cytoplasm. It localises to the nucleus. It catalyses the reaction a hydroperoxide + [thioredoxin]-dithiol = an alcohol + [thioredoxin]-disulfide + H2O. Its function is as follows. Thiol-specific peroxidase that catalyzes the reduction of hydrogen peroxide and organic hydroperoxides to water and alcohols, respectively. Plays a role in cell protection against oxidative stress by detoxifying peroxides and as sensor of hydrogen peroxide-mediated signaling events. Acts as a scavenger of H(2)O(2). In Schizosaccharomyces pombe (strain 972 / ATCC 24843) (Fission yeast), this protein is Peroxiredoxin bcp1 (bcp1).